The following is a 665-amino-acid chain: Protein LOW PHOTOSYNTHETIC EFFICIENCY 1, chloroplastic (665 aa).

The N-terminal 68 residues, 1 to 68 (MQALSILPLK…VSSNRKVLFL (68 aa)), are a transit peptide targeting the chloroplast. PPR repeat units follow at residues 145 to 179 (PLQV…KSES), 181 to 217 (GVIG…GIVP), 218 to 252 (NIVT…GFEP), 253 to 283 (NPIT…LREK), 309 to 344 (GRIC…GVRP), 345 to 375 (SREE…IRER), 380 to 414 (SLSV…GPEP), 422 to 456 (VVSH…GLKP), 457 to 491 (QRRH…GEKP), 492 to 526 (TVIS…GIEP), 527 to 561 (NLYA…GIEP), 562 to 596 (SVVT…NVEP), and 597 to 631 (NEIT…GLKL).

It belongs to the PPR family. P subfamily. In terms of assembly, interacts with HCF173.

It is found in the plastid. Its subcellular location is the chloroplast thylakoid membrane. It localises to the chloroplast stroma. Required for light-regulated photosystem II (PSII) biogenesis and grana thylakoids formation by binding to the 5' UTR of PSII subunit mRNAs (e.g. psbJ, psbN and psbA) in a light-dependent manner through a redox-based mechanism, and facilitating the association of HCF173 with target mRNAs, which encodes PSII reaction center proteins (e.g. J, N and D1), thus regulating its expression by modulating ribosome loading. The sequence is that of Protein LOW PHOTOSYNTHETIC EFFICIENCY 1, chloroplastic from Arabidopsis thaliana (Mouse-ear cress).